Here is a 942-residue protein sequence, read N- to C-terminus: Alanine--tRNA ligase (942 aa).

His-586, His-590, Cys-695, and His-699 together coordinate Zn(2+).

The protein belongs to the class-II aminoacyl-tRNA synthetase family. Zn(2+) serves as cofactor.

Its subcellular location is the cytoplasm. It carries out the reaction tRNA(Ala) + L-alanine + ATP = L-alanyl-tRNA(Ala) + AMP + diphosphate. In terms of biological role, catalyzes the attachment of alanine to tRNA(Ala) in a two-step reaction: alanine is first activated by ATP to form Ala-AMP and then transferred to the acceptor end of tRNA(Ala). Also edits incorrectly charged Ser-tRNA(Ala) and Gly-tRNA(Ala) via its editing domain. This chain is Alanine--tRNA ligase, found in Akkermansia muciniphila (strain ATCC BAA-835 / DSM 22959 / JCM 33894 / BCRC 81048 / CCUG 64013 / CIP 107961 / Muc).